We begin with the raw amino-acid sequence, 395 residues long: Acid ceramidase (395 aa).

An N-terminal signal peptide occupies residues 1-20 (MLGWSRLTFILLSGIVTCLV). Residues Cys31 and Cys340 are joined by a disulfide bond. Cys143 (nucleophile) is an active-site residue. Asn195, Asn259, Asn286, and Asn342 each carry an N-linked (GlcNAc...) asparagine glycan. Cys388 and Cys392 are oxidised to a cystine.

Belongs to the acid ceramidase family. Heterodimer; disulfide-linked. The heterodimer is composed of the disulfide-linked alpha and beta chains produced by autocatalytic cleavage of the precursor. N-glycosylated. In terms of processing, proteolytically cleaved into two chains alpha and beta that remain associated via a disulfide bond. Cleavage gives rise to a conformation change that activates the enzyme. The same catalytic Cys residue mediates the autoproteolytic cleavage and subsequent hydrolysis of lipid substrates. The beta chain may undergo an additional C-terminal processing.

It localises to the lysosome. The protein resides in the secreted. The catalysed reaction is an N-acylsphing-4-enine + H2O = sphing-4-enine + a fatty acid. It catalyses the reaction N-dodecanoylsphing-4-enine + H2O = dodecanoate + sphing-4-enine. The enzyme catalyses N-tetradecanoylsphing-4-enine + H2O = tetradecanoate + sphing-4-enine. It carries out the reaction N-hexadecanoylsphing-4-enine + H2O = sphing-4-enine + hexadecanoate. The catalysed reaction is N-octadecanoylsphing-4-enine + H2O = sphing-4-enine + octadecanoate. It catalyses the reaction N-dodecanoyl-(4R)-hydroxysphinganine + H2O = (4R)-hydroxysphinganine + dodecanoate. The enzyme catalyses N-(dodecanoyl)-sphinganine + H2O = dodecanoate + sphinganine. It carries out the reaction N-(acetyl)-sphing-4-enine + H2O = sphing-4-enine + acetate. The catalysed reaction is N-(hexanoyl)sphing-4-enine + H2O = hexanoate + sphing-4-enine. It catalyses the reaction N-octanoylsphing-4-enine + H2O = octanoate + sphing-4-enine. The enzyme catalyses N-(9Z-octadecenoyl)-sphing-4-enine + H2O = sphing-4-enine + (9Z)-octadecenoate. It carries out the reaction N-dodecanoylethanolamine + H2O = dodecanoate + ethanolamine. Its pathway is lipid metabolism; sphingolipid metabolism. Functionally, lysosomal ceramidase that hydrolyzes sphingolipid ceramides into sphingosine and free fatty acids at acidic pH. Ceramides, sphingosine, and its phosphorylated form sphingosine-1-phosphate are bioactive lipids that mediate cellular signaling pathways regulating several biological processes including cell proliferation, apoptosis and differentiation. Has a higher catalytic efficiency towards C12-ceramides versus other ceramides. Also catalyzes the reverse reaction allowing the synthesis of ceramides from fatty acids and sphingosine. For the reverse synthetic reaction, the natural sphingosine D-erythro isomer is more efficiently utilized as a substrate compared to D-erythro-dihydrosphingosine and D-erythro-phytosphingosine, while the fatty acids with chain lengths of 12 or 14 carbons are the most efficiently used. Also has an N-acylethanolamine hydrolase activity. By regulating the levels of ceramides, sphingosine and sphingosine-1-phosphate in the epidermis, mediates the calcium-induced differentiation of epidermal keratinocytes. Also indirectly regulates tumor necrosis factor/TNF-induced apoptosis. By regulating the intracellular balance between ceramides and sphingosine, in adrenocortical cells, probably also acts as a regulator of steroidogenesis. In Bos taurus (Bovine), this protein is Acid ceramidase.